Reading from the N-terminus, the 134-residue chain is Small ribosomal subunit protein uS8c (134 aa).

It belongs to the universal ribosomal protein uS8 family. In terms of assembly, part of the 30S ribosomal subunit.

It localises to the plastid. Its subcellular location is the chloroplast. One of the primary rRNA binding proteins, it binds directly to 16S rRNA central domain where it helps coordinate assembly of the platform of the 30S subunit. This Pelargonium hortorum (Common geranium) protein is Small ribosomal subunit protein uS8c (rps8).